The following is a 286-amino-acid chain: Tryptophan 2,3-dioxygenase (286 aa).

Substrate contacts are provided by residues 55 to 59, Tyr-117, and Arg-121; that span reads FIIIH. His-244 is a heme binding site. Thr-258 is a binding site for substrate.

This sequence belongs to the tryptophan 2,3-dioxygenase family. As to quaternary structure, homotetramer. Heme serves as cofactor.

It carries out the reaction L-tryptophan + O2 = N-formyl-L-kynurenine. It participates in amino-acid degradation; L-tryptophan degradation via kynurenine pathway; L-kynurenine from L-tryptophan: step 1/2. Its function is as follows. Heme-dependent dioxygenase that catalyzes the oxidative cleavage of the L-tryptophan (L-Trp) pyrrole ring and converts L-tryptophan to N-formyl-L-kynurenine. Catalyzes the oxidative cleavage of the indole moiety. The sequence is that of Tryptophan 2,3-dioxygenase from Shewanella woodyi (strain ATCC 51908 / MS32).